The sequence spans 333 residues: D-lactate dehydrogenase (333 aa).

Residues 156–157, aspartate 176, 207–208, asparagine 213, 234–236, and aspartate 260 each bind NAD(+); these read HI, VP, and VSR. The active site involves arginine 236. The active site involves glutamate 265. Histidine 297 serves as the catalytic Proton donor.

This sequence belongs to the D-isomer specific 2-hydroxyacid dehydrogenase family. Homodimer.

It catalyses the reaction (R)-lactate + NAD(+) = pyruvate + NADH + H(+). The sequence is that of D-lactate dehydrogenase (ldhA) from Lactobacillus delbrueckii subsp. bulgaricus (strain ATCC 11842 / DSM 20081 / BCRC 10696 / JCM 1002 / NBRC 13953 / NCIMB 11778 / NCTC 12712 / WDCM 00102 / Lb 14).